The chain runs to 458 residues: Phosphoglucosamine mutase (458 aa).

Ser-106 serves as the catalytic Phosphoserine intermediate. Residues Ser-106, Asp-247, Asp-249, and Asp-251 each coordinate Mg(2+). Position 106 is a phosphoserine (Ser-106).

The protein belongs to the phosphohexose mutase family. It depends on Mg(2+) as a cofactor. Post-translationally, activated by phosphorylation.

It catalyses the reaction alpha-D-glucosamine 1-phosphate = D-glucosamine 6-phosphate. Its function is as follows. Catalyzes the conversion of glucosamine-6-phosphate to glucosamine-1-phosphate. The sequence is that of Phosphoglucosamine mutase from Chlamydia caviae (strain ATCC VR-813 / DSM 19441 / 03DC25 / GPIC) (Chlamydophila caviae).